The primary structure comprises 187 residues: Large ribosomal subunit protein uL22 (187 aa).

Basic and acidic residues-rich tracts occupy residues 158–168 (TKATDESEQAK) and 178–187 (RQKEKMMRNE). The disordered stretch occupies residues 158–187 (TKATDESEQAKKKLSKKKLQRQKEKMMRNE).

This sequence belongs to the universal ribosomal protein uL22 family.

This Anopheles gambiae (African malaria mosquito) protein is Large ribosomal subunit protein uL22 (RpL17).